We begin with the raw amino-acid sequence, 472 residues long: Adenosylhomocysteinase (472 aa).

Substrate contacts are provided by Thr-61, Asp-139, and Glu-198. Position 199 to 201 (199 to 201) interacts with NAD(+); sequence TTT. The substrate site is built by Lys-228 and Asp-232. Residues Asn-233, 262–267, Glu-285, Asn-320, 341–343, and Asn-386 each bind NAD(+); these read GFGDVG and IGH.

This sequence belongs to the adenosylhomocysteinase family. It depends on NAD(+) as a cofactor.

It localises to the cytoplasm. The catalysed reaction is S-adenosyl-L-homocysteine + H2O = L-homocysteine + adenosine. The protein operates within amino-acid biosynthesis; L-homocysteine biosynthesis; L-homocysteine from S-adenosyl-L-homocysteine: step 1/1. Functionally, may play a key role in the regulation of the intracellular concentration of adenosylhomocysteine. This chain is Adenosylhomocysteinase, found in Sphingopyxis alaskensis (strain DSM 13593 / LMG 18877 / RB2256) (Sphingomonas alaskensis).